The following is a 1069-amino-acid chain: Protogenin B (1069 aa).

The signal sequence occupies residues 1-26 (MGSVRWKTHQQWLIIFWILSFSGVFG). The Extracellular segment spans residues 27–936 (FSELWFSIEP…LYHIDEKSMS (910 aa)). 4 Ig-like domains span residues 30–117 (LWFS…ARLT), 122–208 (LVFS…AELV), 221–308 (PLII…GNVT), and 312–396 (PSLV…SRLI). Disulfide bonds link C51–C100 and C143–C191. 4 N-linked (GlcNAc...) asparagine glycosylation sites follow: N81, N88, N180, and N229. Cysteines 242 and 290 form a disulfide. N-linked (GlcNAc...) asparagine glycosylation is found at N299 and N306. Residues 317-336 (KPESQTRPRAGTARFSCQAE) are disordered. Cysteines 333 and 380 form a disulfide. Fibronectin type-III domains lie at 406 to 500 (APRN…TLED), 502 to 601 (PLRT…TPKT), 608 to 701 (PAPN…CPST), 711 to 804 (PPDH…TLLE), and 809 to 904 (PPES…VKGK). N-linked (GlcNAc...) asparagine glycosylation is found at N458, N473, and N560. The segment covering 590-605 (PSAWSSHRTPKTSSAT) has biased composition (polar residues). The segment at 590-609 (PSAWSSHRTPKTSSATVPPA) is disordered. Residues N618, N720, and N834 are each glycosylated (N-linked (GlcNAc...) asparagine). The helical transmembrane segment at 937–957 (GIIVGVCIALSCIILCIFILL) threads the bilayer. Residues 958–1069 (SKTQTQKSAS…KTVLCYEDEA (112 aa)) lie on the Cytoplasmic side of the membrane.

This sequence belongs to the immunoglobulin superfamily. DCC family. Initially expressed in the ventral forebrain and ventral spinal cord. Later, also expressed in the midbrain and in parts of the diencephalon and hindbrain.

It localises to the membrane. Its function is as follows. May play a role in anteroposterior axis elongation. The sequence is that of Protogenin B from Danio rerio (Zebrafish).